We begin with the raw amino-acid sequence, 312 residues long: Photosystem I assembly protein Ycf4 (312 aa).

Transmembrane regions (helical) follow at residues 42-62, 91-111, and 113-133; these read WAFI…SSYF, IILF…GLFL, and FYLW…IYIY.

This sequence belongs to the Ycf4 family.

Its subcellular location is the plastid. The protein localises to the chloroplast thylakoid membrane. Its function is as follows. Seems to be required for the assembly of the photosystem I complex. This is Photosystem I assembly protein Ycf4 from Pleurastrum terricola (Filamentous green alga).